The sequence spans 130 residues: Small ribosomal subunit protein uS9 (130 aa).

Residues 109–130 (RMKERKKYGLKGARRAPQFSKR) are disordered. The span at 111–130 (KERKKYGLKGARRAPQFSKR) shows a compositional bias: basic residues.

It belongs to the universal ribosomal protein uS9 family.

The polypeptide is Small ribosomal subunit protein uS9 (Listeria innocua serovar 6a (strain ATCC BAA-680 / CLIP 11262)).